The primary structure comprises 695 residues: Amphiphysin (695 aa).

Coiled-coil stretches lie at residues 10 to 83 (AKNV…SLHE) and 144 to 191 (DYDS…QEEL). The BAR domain occupies 24 to 240 (VLQKLGKADE…MTKLGDQHAD (217 aa)). Disordered stretches follow at residues 244–312 (TIQG…VTPT) and 486–617 (GAPG…EASQ). S252 is modified (phosphoserine). The residue at position 260 (T260) is a Phosphothreonine. The span at 261 to 274 (PSPPEEPSPLPSPT) shows a compositional bias: pro residues. S262, S268, S272, and S276 each carry phosphoserine. Residue T280 is modified to Phosphothreonine. 2 positions are modified to phosphoserine: S506 and S638. Positions 622-695 (GFLYKVETLH…FPENFTRRLD (74 aa)) constitute an SH3 domain.

Heterodimer with BIN1. Binds SH3GLB1. Interacts with REPS1 and SGIP1. Binds AP2A2. Interacts with AP2B1. Interacts with DNM1 and SYNJ1. In terms of tissue distribution, neurons, certain endocrine cell types and spermatocytes.

It localises to the cytoplasmic vesicle. Its subcellular location is the secretory vesicle. It is found in the synaptic vesicle membrane. The protein resides in the cytoplasm. The protein localises to the cytoskeleton. Functionally, may participate in mechanisms of regulated exocytosis in synapses and certain endocrine cell types. May control the properties of the membrane associated cytoskeleton. The protein is Amphiphysin (AMPH) of Homo sapiens (Human).